The primary structure comprises 730 residues: Rap1 GTPase-activating protein 2 (730 aa).

Phosphoserine; by PKG/PRKG1; in vitro is present on Ser7. A disordered region spans residues 32 to 53 (ANSSDATLPDRPLSPPLTAPPT). Position 45 is a phosphoserine (Ser45). Thr49 carries the post-translational modification Phosphothreonine. One can recognise a Rap-GAP domain in the interval 248–464 (IVSYDEHEVN…RTRAALLDNL (217 aa)). Ser507 carries the post-translational modification Phosphoserine. The interval 509–533 (ETMVGGQKKSHSGGIPGSLSGGISH) is disordered. 5 positions are modified to phosphoserine: Ser544, Ser558, Ser564, Ser612, and Ser613. The tract at residues 552-730 (VKNQSRSPIK…LSHASSGAGH (179 aa)) is disordered. Positions 585–613 (DSTSSTPKTPDGGHSSQEIKSETSSNPSS) are enriched in polar residues. Residues 618-631 (PNKEKPFMKLKENG) are compositionally biased toward basic and acidic residues. Over residues 635–647 (SRSSSSTSSVSST) the composition is skewed to low complexity. Residues 661-670 (GSQPSTTSPF) show a composition bias toward polar residues. Residues 678–687 (SPSPSSESPS) show a composition bias toward low complexity. The segment covering 699–712 (RSPTDAKSRNSPRS) has biased composition (polar residues).

In terms of processing, in vitro phosphorylated by cGMP-dependent protein kinase 1 (cGKI) at Ser-7; the phosphorylation probably does not regulate GAP activity. In terms of tissue distribution, isoform 1 and isoform 2 are expressed in platelets with isoform 2 being the predominant form. Expressed in lymphocytes, heart, testis and pancreas.

The protein resides in the cytoplasm. The protein localises to the perinuclear region. Its function is as follows. GTPase activator for the nuclear Ras-related regulatory protein RAP-1A (KREV-1), converting it to the putatively inactive GDP-bound state. The chain is Rap1 GTPase-activating protein 2 (RAP1GAP2) from Homo sapiens (Human).